A 568-amino-acid chain; its full sequence is MPYATARSGDVMSSAAPPCCTSLLGLSLSMFVAPGTLTAAPLDAPVVNAPAPTPPTPDLAYPELFQAVQRGELFDDQKHFVDFLPLRDPALINADYLAQHDHPGFDLRKFVDANFEESPPVQTDAIRQDTALREHIDLLWPKLVRSQNHVPPHSSLLALPHPYVVPGGRFREVYYWDSYFTMLGLVKSGETTLSRQMLDNFAYLIDTYGHIPNGNRTYYLSRSQPPFFSYMVELQAGVEGEAVYQRYLPQLQKEYAYWMQGSDDLQPGQAARHVVRLADGSVLNRYWDERDTPRPEAWLHDTRTAAEVTDRPAAEVYRDLRAGAESGWDYTSRWLADGQNLRTIRTTAILPIDLNSLLYHLERTLALACAQPGAECTRDYAALAQQRKQAIDAHLWNTAGYYADYDWQTRTLSNQVTAAALYPLFAGLASDDHAKRTASTVRKTLLRPGGLATTAVKTGQQWDEPNGWAPLQWVAVDGLRRYGEDALARTIGERFLAQVQALFAREHKLVEKYGLETDAAGGGGGEYALQDGFGWTNGVTLMLLNLYPGKDTKAAPAKRVRKPEAAAR.

A signal peptide spans 1-39 (MPYATARSGDVMSSAAPPCCTSLLGLSLSMFVAPGTLTA). Residues Arg169, 176 to 177 (WD), Asn213, 222 to 224 (RSQ), 294 to 296 (RPE), and Gly327 each bind substrate. Catalysis depends on proton donor/acceptor residues Asp329 and Glu511. Residue Glu526 participates in substrate binding.

It belongs to the glycosyl hydrolase 37 family.

The protein localises to the periplasm. The enzyme catalyses alpha,alpha-trehalose + H2O = alpha-D-glucose + beta-D-glucose. Its function is as follows. Provides the cells with the ability to utilize trehalose at high osmolarity by splitting it into glucose molecules that can subsequently be taken up by the phosphotransferase-mediated uptake system. In Xanthomonas axonopodis pv. citri (strain 306), this protein is Periplasmic trehalase.